The chain runs to 917 residues: Thiamine biosynthesis bifunctional protein ThiEC (917 aa).

Positions 1-243 are thiamine-phosphate synthase; it reads MSNEYPYASM…EGWKAVRGDK (243 aa). Residues 48–52 and D84 contribute to the 4-amino-2-methyl-5-(diphosphooxymethyl)pyrimidine site; that span reads QLRAK. The Mg(2+) site is built by D85 and D109. S128 lines the 4-amino-2-methyl-5-(diphosphooxymethyl)pyrimidine pocket. A 2-[(2R,5Z)-2-carboxy-4-methylthiazol-5(2H)-ylidene]ethyl phosphate-binding site is contributed by 157 to 159; the sequence is STT. K160 is a 4-amino-2-methyl-5-(diphosphooxymethyl)pyrimidine binding site. 2-[(2R,5Z)-2-carboxy-4-methylthiazol-5(2H)-ylidene]ethyl phosphate contacts are provided by residues G196 and 216–217; that span reads VS. Residues 256–311 form a disordered region; it reads PATDTQAAQEGAAKPGSEATEKKFTNAKDAKDAQKLAKQQRVDIAARGSKQRDKAH. A phosphomethylpyrimidine synthase region spans residues 271–917; it reads GSEATEKKFT…GGKLYSTAQE (647 aa). Basic and acidic residues predominate over residues 274 to 290; the sequence is ATEKKFTNAKDAKDAQK. 5-amino-1-(5-phospho-beta-D-ribosyl)imidazole contacts are provided by residues N487, M516, Y545, H581, 601 to 603, 642 to 645, and E681; these read SRG and DGLR. H685 contacts Zn(2+). Residue Y708 participates in 5-amino-1-(5-phospho-beta-D-ribosyl)imidazole binding. H749 is a binding site for Zn(2+). Residues C829, C832, and C837 each coordinate [4Fe-4S] cluster.

The protein in the N-terminal section; belongs to the thiamine-phosphate synthase family. This sequence in the C-terminal section; belongs to the ThiC family. [4Fe-4S] cluster is required as a cofactor.

The catalysed reaction is 2-[(2R,5Z)-2-carboxy-4-methylthiazol-5(2H)-ylidene]ethyl phosphate + 4-amino-2-methyl-5-(diphosphooxymethyl)pyrimidine + 2 H(+) = thiamine phosphate + CO2 + diphosphate. It catalyses the reaction 2-(2-carboxy-4-methylthiazol-5-yl)ethyl phosphate + 4-amino-2-methyl-5-(diphosphooxymethyl)pyrimidine + 2 H(+) = thiamine phosphate + CO2 + diphosphate. It carries out the reaction 4-methyl-5-(2-phosphooxyethyl)-thiazole + 4-amino-2-methyl-5-(diphosphooxymethyl)pyrimidine + H(+) = thiamine phosphate + diphosphate. The enzyme catalyses 5-amino-1-(5-phospho-beta-D-ribosyl)imidazole + S-adenosyl-L-methionine = 4-amino-2-methyl-5-(phosphooxymethyl)pyrimidine + CO + 5'-deoxyadenosine + formate + L-methionine + 3 H(+). The protein operates within cofactor biosynthesis; thiamine diphosphate biosynthesis; thiamine phosphate from 4-amino-2-methyl-5-diphosphomethylpyrimidine and 4-methyl-5-(2-phosphoethyl)-thiazole: step 1/1. In terms of biological role, condenses 4-methyl-5-(beta-hydroxyethyl)thiazole monophosphate (THZ-P) and 2-methyl-4-amino-5-hydroxymethyl pyrimidine pyrophosphate (HMP-PP) to form thiamine monophosphate (TMP). Catalyzes the synthesis of the hydroxymethylpyrimidine phosphate (HMP-P) moiety of thiamine from aminoimidazole ribotide (AIR) in a radical S-adenosyl-L-methionine (SAM)-dependent reaction. This Bifidobacterium longum (strain NCC 2705) protein is Thiamine biosynthesis bifunctional protein ThiEC (thiE/thiC).